The sequence spans 405 residues: Tryptophan synthase beta chain (405 aa).

Position 98 is an N6-(pyridoxal phosphate)lysine (lysine 98).

This sequence belongs to the TrpB family. Tetramer of two alpha and two beta chains. Requires pyridoxal 5'-phosphate as cofactor.

The catalysed reaction is (1S,2R)-1-C-(indol-3-yl)glycerol 3-phosphate + L-serine = D-glyceraldehyde 3-phosphate + L-tryptophan + H2O. The protein operates within amino-acid biosynthesis; L-tryptophan biosynthesis; L-tryptophan from chorismate: step 5/5. In terms of biological role, the beta subunit is responsible for the synthesis of L-tryptophan from indole and L-serine. This chain is Tryptophan synthase beta chain, found in Xanthomonas oryzae pv. oryzae (strain PXO99A).